A 322-amino-acid polypeptide reads, in one-letter code: MAGFMRQLFVCMIGIYGSFLSWAVMQEKIITRPYDGERFSSPALLSLAQSFMTVLCGLLWNWFHGVSARGLLEPKFLGYFSSIAISASLSSYFGYASMFHLSYPTVILGKSCKLLPVIALHVFVYKRKFPPHKYLIVTMITAGVSIFSYFQNTSSKGKHAEHDSPIGLLLLFFNLLMDGITNTTQDKVFGKYKLSSVTMMIAVNLGIACLNGLYLISPFCNQQPLSFINRHPSILKDMLLFACTGSVGQLFIFFTLEKFGSITLVTITLTRKIFTMLLSVFHFHHTVSSIQWLGILLVFLGISLEAGLKILNNNSTAKKKAS.

5 helical membrane passes run 4 to 24 (FMRQ…SWAV), 43 to 63 (ALLS…WNWF), 76 to 96 (FLGY…FGYA), 105 to 125 (TVIL…VFVY), and 129 to 149 (FPPH…IFSY). A glycan (N-linked (GlcNAc...) asparagine) is linked at Asn152. Transmembrane regions (helical) follow at residues 164–184 (SPIG…TNTT), 199–219 (MMIA…ISPF), 250–270 (LFIF…ITLT), and 290–310 (IQWL…GLKI). N-linked (GlcNAc...) asparagine glycans are attached at residues Asn313 and Asn314.

The protein belongs to the nucleotide-sugar transporter family. SLC35B subfamily.

Its subcellular location is the endoplasmic reticulum membrane. Its function is as follows. May be involved in specific transport of UDP-Gal from the cytosol to the Golgi lumen. Involved in the maintenance of optimal conditions for the folding of secretory pathway proteins in the endoplasmic reticulum. This chain is UDP-galactose transporter homolog 1 (hut1), found in Schizosaccharomyces pombe (strain 972 / ATCC 24843) (Fission yeast).